Consider the following 153-residue polypeptide: Small ribosomal subunit protein eS19 (153 aa).

It belongs to the eukaryotic ribosomal protein eS19 family. Part of the 30S ribosomal subunit.

In terms of biological role, may be involved in maturation of the 30S ribosomal subunit. The sequence is that of Small ribosomal subunit protein eS19 from Aeropyrum pernix (strain ATCC 700893 / DSM 11879 / JCM 9820 / NBRC 100138 / K1).